A 150-amino-acid polypeptide reads, in one-letter code: UPF0178 protein PBPRA1738 (150 aa).

Belongs to the UPF0178 family.

This chain is UPF0178 protein PBPRA1738, found in Photobacterium profundum (strain SS9).